Reading from the N-terminus, the 390-residue chain is Altered inheritance of mitochondria protein 6 (390 aa).

The signal sequence occupies residues 1 to 17 (MLGLKGCLTILIGYVIA).

It belongs to the AIM6 family.

The chain is Altered inheritance of mitochondria protein 6 from Saccharomyces cerevisiae (strain ATCC 204508 / S288c) (Baker's yeast).